Reading from the N-terminus, the 709-residue chain is Homeobox-leucine zipper protein HDG4 (709 aa).

The disordered stretch occupies residues 61-92 (ESGSGKSTGSGHDPVENTAIEQEPPAAKKKRY). The segment at residues 88 to 147 (KKKRYHRHTASQIQQMEALFKENAHPDTKTRLRLSKKLGLSPIQVKFWFQNKRTQIKAQQ) is a DNA-binding region (homeobox). A coiled-coil region spans residues 137-205 (QNKRTQIKAQ…LDRLRSIVSM (69 aa)). The START domain maps to 229–466 (AEEEKAIDME…LKRQCERMAS (238 aa)).

The protein belongs to the HD-ZIP homeobox family. Class IV subfamily. As to expression, expressed in flowers.

The protein localises to the nucleus. Functionally, probable transcription factor. The protein is Homeobox-leucine zipper protein HDG4 of Arabidopsis thaliana (Mouse-ear cress).